Here is a 694-residue protein sequence, read N- to C-terminus: Elongation factor G (694 aa).

The tr-type G domain maps to 8 to 287 (EDYRNFGIMA…AVISYLPSPV (280 aa)). GTP contacts are provided by residues 17–24 (AHIDAGKT), 86–90 (DTPGH), and 140–143 (NKMD).

The protein belongs to the TRAFAC class translation factor GTPase superfamily. Classic translation factor GTPase family. EF-G/EF-2 subfamily.

The protein localises to the cytoplasm. Catalyzes the GTP-dependent ribosomal translocation step during translation elongation. During this step, the ribosome changes from the pre-translocational (PRE) to the post-translocational (POST) state as the newly formed A-site-bound peptidyl-tRNA and P-site-bound deacylated tRNA move to the P and E sites, respectively. Catalyzes the coordinated movement of the two tRNA molecules, the mRNA and conformational changes in the ribosome. This is Elongation factor G from Bartonella quintana (strain Toulouse) (Rochalimaea quintana).